Reading from the N-terminus, the 128-residue chain is Large ribosomal subunit protein mL51 (128 aa).

Residues 1–31 (MAGNLLSGAGRRLWDWVPLACRSFSLGVPRL) constitute a mitochondrion transit peptide.

The protein belongs to the mitochondrion-specific ribosomal protein mL51 family. As to quaternary structure, component of the mitochondrial large ribosomal subunit (mt-LSU). Mature mammalian 55S mitochondrial ribosomes consist of a small (28S) and a large (39S) subunit. The 28S small subunit contains a 12S ribosomal RNA (12S mt-rRNA) and 30 different proteins. The 39S large subunit contains a 16S rRNA (16S mt-rRNA), a copy of mitochondrial valine transfer RNA (mt-tRNA(Val)), which plays an integral structural role, and 52 different proteins. Interacts with OXA1L.

It is found in the mitochondrion. The chain is Large ribosomal subunit protein mL51 (MRPL51) from Homo sapiens (Human).